We begin with the raw amino-acid sequence, 393 residues long: Proteasome-activating nucleotidase (393 aa).

The stretch at 14–53 forms a coiled coil; the sequence is SDEVQLVRLLEEKIKSLQIEIENLRKELNYYKAEMEKMLS. ATP contacts are provided by residues 178–183 and Tyr317; that span reads GTGKTM. The interval 391-393 is docks into pockets in the proteasome alpha-ring to cause gate opening; it reads KYS.

Belongs to the AAA ATPase family. As to quaternary structure, homohexamer. The hexameric complex has a two-ring architecture resembling a top hat that caps the 20S proteasome core at one or both ends. Upon ATP-binding, the C-terminus of PAN interacts with the alpha-rings of the proteasome core by binding to the intersubunit pockets.

The protein resides in the cytoplasm. ATPase which is responsible for recognizing, binding, unfolding and translocation of substrate proteins into the archaeal 20S proteasome core particle. Is essential for opening the gate of the 20S proteasome via an interaction with its C-terminus, thereby allowing substrate entry and access to the site of proteolysis. Thus, the C-termini of the proteasomal ATPase function like a 'key in a lock' to induce gate opening and therefore regulate proteolysis. Unfolding activity requires energy from ATP hydrolysis, whereas ATP binding alone promotes ATPase-20S proteasome association which triggers gate opening, and supports translocation of unfolded substrates. The sequence is that of Proteasome-activating nucleotidase from Saccharolobus islandicus (strain M.16.27) (Sulfolobus islandicus).